The primary structure comprises 333 residues: Electron transfer flavoprotein subunit alpha, mitochondrial (333 aa).

The transit peptide at 1 to 19 (MFRAAAPGQLRRAASLLRF) directs the protein to the mitochondrion. The segment at 20–204 (QSTLVIAEHA…GISEWLDQKL (185 aa)) is domain I. Position 59 is an N6-acetyllysine; alternate (Lys-59). Lys-59 bears the N6-succinyllysine; alternate mark. Lys-62 carries the N6-acetyllysine modification. An N6-acetyllysine; alternate modification is found at Lys-69. Lys-69 carries the post-translational modification N6-succinyllysine; alternate. At Lys-75 the chain carries N6-acetyllysine. Lys-85 carries the post-translational modification N6-acetyllysine; alternate. Position 85 is an N6-succinyllysine; alternate (Lys-85). Phosphothreonine is present on Thr-93. 2 positions are modified to N6-acetyllysine: Lys-101 and Lys-139. At Ser-140 the chain carries Phosphoserine. Position 158 is an N6-acetyllysine; alternate (Lys-158). N6-succinyllysine; alternate is present on Lys-158. Lys-164 bears the N6-acetyllysine mark. Lys-187 carries the N6-succinyllysine modification. Lys-203 carries the N6-acetyllysine; alternate modification. The residue at position 203 (Lys-203) is an N6-succinyllysine; alternate. A domain II region spans residues 205 to 333 (TKSDRPELTG…PEMTEILKKK (129 aa)). N6-succinyllysine is present on Lys-216. Residue Arg-223 coordinates FAD. Lys-226 and Lys-232 each carry N6-acetyllysine; alternate. Lys-226 and Lys-232 each carry N6-succinyllysine; alternate. FAD is bound by residues Ser-248, 263–266 (VGQT), 281–286 (SGAIQH), and Asn-300. Lys-301 carries the N6-succinyllysine modification. FAD is bound at residue 318 to 319 (DL).

This sequence belongs to the ETF alpha-subunit/FixB family. In terms of assembly, heterodimer composed of ETFA and ETFB. Identified in a complex that contains ETFA, ETFB and ETFRF1. Interaction with ETFRF1 promotes dissociation of the bound FAD and loss of electron transfer activity. Interacts with TASOR. It depends on FAD as a cofactor.

The protein localises to the mitochondrion matrix. In terms of biological role, heterodimeric electron transfer flavoprotein that accepts electrons from several mitochondrial dehydrogenases, including acyl-CoA dehydrogenases, glutaryl-CoA and sarcosine dehydrogenase. It transfers the electrons to the main mitochondrial respiratory chain via ETF-ubiquinone oxidoreductase (ETF dehydrogenase). Required for normal mitochondrial fatty acid oxidation and normal amino acid metabolism. In Rattus norvegicus (Rat), this protein is Electron transfer flavoprotein subunit alpha, mitochondrial (Etfa).